The primary structure comprises 595 residues: UvrABC system protein C (595 aa).

Residues S14–I91 form the GIY-YIG domain. The 36-residue stretch at D196–L231 folds into the UVR domain.

Belongs to the UvrC family. Interacts with UvrB in an incision complex.

It localises to the cytoplasm. Functionally, the UvrABC repair system catalyzes the recognition and processing of DNA lesions. UvrC both incises the 5' and 3' sides of the lesion. The N-terminal half is responsible for the 3' incision and the C-terminal half is responsible for the 5' incision. This is UvrABC system protein C from Streptococcus thermophilus (strain CNRZ 1066).